The chain runs to 159 residues: MATTATRHQDSKLSEKAESILAGFKLNWMNLRDAETGKVLWQSTEDMADPKREHKAHVPKNLLKCRTVSREINFTSSVKIEKFRLEQRVYLKGTIIEEWYFDFGFVIPDSTNTWQNMIEAAPESQMFPPSVLSGNVVVETLFYDGDLLVSTSRVRLYYD.

The protein belongs to the PDE6D/unc-119 family.

In Caenorhabditis elegans, this protein is Phosphodiesterase delta-like protein (pdl-1).